Reading from the N-terminus, the 161-residue chain is DNA endonuclease I-CvuI (161 aa).

The protein belongs to the LAGLIDADG endonuclease family.

It localises to the plastid. The protein resides in the chloroplast. In terms of biological role, probable endonuclease involved in intron homing. This is DNA endonuclease I-CvuI from Chlorella vulgaris (Green alga).